The chain runs to 498 residues: ATP synthase subunit beta, chloroplastic (498 aa).

172–179 (GGAGVGKT) provides a ligand contact to ATP.

The protein belongs to the ATPase alpha/beta chains family. As to quaternary structure, F-type ATPases have 2 components, CF(1) - the catalytic core - and CF(0) - the membrane proton channel. CF(1) has five subunits: alpha(3), beta(3), gamma(1), delta(1), epsilon(1). CF(0) has four main subunits: a(1), b(1), b'(1) and c(9-12).

It is found in the plastid. The protein resides in the chloroplast thylakoid membrane. The enzyme catalyses ATP + H2O + 4 H(+)(in) = ADP + phosphate + 5 H(+)(out). Produces ATP from ADP in the presence of a proton gradient across the membrane. The catalytic sites are hosted primarily by the beta subunits. This Oryza nivara (Indian wild rice) protein is ATP synthase subunit beta, chloroplastic.